The chain runs to 212 residues: Telomere repeats-binding bouquet formation protein 2 (212 aa).

It belongs to the TERB2 family. In terms of assembly, component of the MAJIN-TERB1-TERB2 complex.

Its function is as follows. Meiosis-specific telomere-associated protein involved in meiotic telomere attachment to the nucleus inner membrane, a crucial step for homologous pairing and synapsis. Component of the MAJIN-TERB1-TERB2 complex, which promotes telomere cap exchange by mediating attachment of telomeric DNA to the inner nuclear membrane and replacement of the protective cap of telomeric chromosomes: in early meiosis, the MAJIN-TERB1-TERB2 complex associates with telomeric DNA and the shelterin/telosome complex. During prophase, the complex matures and promotes release of the shelterin/telosome complex from telomeric DNA. This Danio rerio (Zebrafish) protein is Telomere repeats-binding bouquet formation protein 2.